The primary structure comprises 178 residues: Crossover junction endodeoxyribonuclease RuvC (178 aa).

Residues Asp-14, Glu-73, and Asp-145 contribute to the active site. Residues Asp-14, Glu-73, and Asp-145 each coordinate Mg(2+).

It belongs to the RuvC family. Homodimer which binds Holliday junction (HJ) DNA. The HJ becomes 2-fold symmetrical on binding to RuvC with unstacked arms; it has a different conformation from HJ DNA in complex with RuvA. In the full resolvosome a probable DNA-RuvA(4)-RuvB(12)-RuvC(2) complex forms which resolves the HJ. Mg(2+) serves as cofactor.

Its subcellular location is the cytoplasm. The enzyme catalyses Endonucleolytic cleavage at a junction such as a reciprocal single-stranded crossover between two homologous DNA duplexes (Holliday junction).. In terms of biological role, the RuvA-RuvB-RuvC complex processes Holliday junction (HJ) DNA during genetic recombination and DNA repair. Endonuclease that resolves HJ intermediates. Cleaves cruciform DNA by making single-stranded nicks across the HJ at symmetrical positions within the homologous arms, yielding a 5'-phosphate and a 3'-hydroxyl group; requires a central core of homology in the junction. The consensus cleavage sequence is 5'-(A/T)TT(C/G)-3'. Cleavage occurs on the 3'-side of the TT dinucleotide at the point of strand exchange. HJ branch migration catalyzed by RuvA-RuvB allows RuvC to scan DNA until it finds its consensus sequence, where it cleaves and resolves the cruciform DNA. The chain is Crossover junction endodeoxyribonuclease RuvC from Nitrosomonas eutropha (strain DSM 101675 / C91 / Nm57).